The chain runs to 492 residues: Malonyl-CoA decarboxylase, mitochondrial (492 aa).

The disordered stretch occupies residues 1–28 (MRGLGPGLRARRLLPLRSPPRPPGPRGR). The N-terminal 38 residues, 1–38 (MRGLGPGLRARRLLPLRSPPRPPGPRGRRLCGGLAASA), are a transit peptide targeting the mitochondrion. The alpha-helical domain stretch occupies residues 39–189 (MDELLRRAVP…VLKSMLSEWF (151 aa)). K58 is modified (N6-acetyllysine). K167 bears the N6-acetyllysine; alternate mark. An N6-succinyllysine; alternate modification is found at K167. The tract at residues 190–492 (SSGFLNLERV…VAQFQNNSKL (303 aa)) is catalytic domain. Residue K210 is modified to N6-acetyllysine. Position 221 is an N6-succinyllysine (K221). Position 298-304 (298-304 (QGVELGT)) interacts with malonyl-CoA. K316 is modified (N6-acetyllysine). S328 contacts malonyl-CoA. The active-site Proton acceptor is S328. At K385 the chain carries N6-acetyllysine; alternate. K385 carries the N6-succinyllysine; alternate modification. Position 388 is an N6-acetyllysine (K388). A malonyl-CoA-binding site is contributed by H422. Catalysis depends on H422, which acts as the Proton donor. N6-acetyllysine is present on residues K441 and K471. Positions 490–492 (SKL) match the Microbody targeting signal motif.

Homotetramer. Dimer of dimers. The two subunits within a dimer display conformational differences suggesting that at any given moment, only one of the two subunits is competent for malonyl-CoA binding and catalytic activity. Under oxidizing conditions, can form disulfide-linked homotetramers (in vitro). Associates with the peroxisomal targeting signal receptor PEX5. Post-translationally, interchain disulfide bonds may form in peroxisomes (Potential). Interchain disulfide bonds are not expected to form in the reducing environment of the cytoplasm and mitochondria. In terms of processing, acetylation at Lys-471 activates malonyl-CoA decarboxylase activity. Deacetylation at Lys-471 by SIRT4 represses activity, leading to promote lipogenesis.

The protein localises to the cytoplasm. It localises to the mitochondrion matrix. The protein resides in the peroxisome. Its subcellular location is the peroxisome matrix. The catalysed reaction is malonyl-CoA + H(+) = acetyl-CoA + CO2. It participates in metabolic intermediate biosynthesis; acetyl-CoA biosynthesis; acetyl-CoA from malonyl-CoA: step 1/1. With respect to regulation, malonyl-CoA decarboxylase activity does not require any cofactors or divalent metal ions. Its function is as follows. Catalyzes the conversion of malonyl-CoA to acetyl-CoA. In the fatty acid biosynthesis MCD selectively removes malonyl-CoA and thus assures that methyl-malonyl-CoA is the only chain elongating substrate for fatty acid synthase and that fatty acids with multiple methyl side chains are produced. In peroxisomes it may be involved in degrading intraperoxisomal malonyl-CoA, which is generated by the peroxisomal beta-oxidation of odd chain-length dicarboxylic fatty acids. Plays a role in the metabolic balance between glucose and lipid oxidation in muscle independent of alterations in insulin signaling. Plays a role in controlling the extent of ischemic injury by promoting glucose oxidation. The polypeptide is Malonyl-CoA decarboxylase, mitochondrial (Mus musculus (Mouse)).